A 942-amino-acid chain; its full sequence is MNIGSLLHSSMLGKQFQSNQSQQEVVSNNIAECNENNNNNNNNNNNNNNSNNNNNNNNNNNNNNNNNNNNNNDNNNNSNNNKININESSQSITETVRSPYSSPSSSISSPSRSPSPNSPASSSPIHSPIPNTNFKQSGEYQSIPSPQNIHGLNKKVKVDMLESPNSSNSSPSFSSNMSPSSSNSPRHRSNSTSNNKSLLQYQFNQSNQSPSFSPLRNNKNNNNINNNNNNNNNNNNNNNNNNNQSPSMNGSPSSNLSKSNSGIPPLQLQAPSNTSSPQLLSPNHNQQRISPNRYLNGGNNNHNNNNNNNNNNNNNNNNNNNNNNNNHNNHNNNNNNNNNNNNNNNNNNNNNNNNNNNNNNNNNNNNNNNNNNINNNNINNNNHNYNHNQNHNHNHNYNNNNQNNQNNNNDDNFSPSHSPNLSPSNYNSSPTHYGNNNNDTPKRSHASYKNNNNNNNNNNNSNSSFDEYQPQQKVSRSNSPNNDKEKKRRTRLKKEQADILKTFFDNDDYPTKDDKETLANRLGMSYCAVTTWFSNKRQEKKRRGDVAPVQTGGRRVPIDDEDDYENRNGDNSPSRNQGGAIELLKNSSSGLTPILESLNVKQQNNINFFKNNNMDNNNKNVPHLSLSNNNNNNNNNNNNNNNNNNNNNNNNRNRNNNNIYNNNNNNNNNNSNNRGKNFSDSGSSDSDSELNRHNNNNNNNSNNYNNGNSNSNNNRNNNNNYNYNNYINNNNYNNNNNRQHCDDEEEDEQYFNNNNNNNNNNNNNRISDSSDDQYFSDDTNNNNDNYNNGNNNYNNNNNNNNFNNNYMNNYNNNYNNNNYNNNNSYNNSNGNNNFNNNNNNNNQNNNNNNNNNQYNNNNKNYLNNIPSSKKHQLQGNYERRNSLPNSQIQNNFNGDNNNNNNNKNNNNNNQNNNGNGNNNNNNNNDNNIYKRRHSMDDDCQQN.

Composition is skewed to low complexity over residues 32-87 (ECNE…NINE) and 98-130 (SPYSSPSSSISSPSRSPSPNSPASSSPIHSPIP). 4 disordered regions span residues 32 to 149 (ECNE…PQNI), 161 to 494 (LESP…RLKK), 537 to 580 (RQEK…QGGA), and 609 to 942 (FKNN…CQQN). Polar residues predominate over residues 131 to 149 (NTNFKQSGEYQSIPSPQNI). Positions 163–261 (SPNSSNSSPS…PSSNLSKSNS (99 aa)) are enriched in low complexity. Polar residues predominate over residues 269 to 290 (QAPSNTSSPQLLSPNHNQQRIS). Composition is skewed to low complexity over residues 299–430 (NNNH…NSSP) and 450–464 (NNNNNNNNNNNSNSS). Positions 465–481 (FDEYQPQQKVSRSNSPN) are enriched in polar residues. Residues 485-544 (EKKRRTRLKKEQADILKTFFDNDDYPTKDDKETLANRLGMSYCAVTTWFSNKRQEKKRRG) constitute a DNA-binding region (homeobox). Composition is skewed to low complexity over residues 609–621 (FKNNNMDNNNKNV), 628–685 (NNNN…GSSD), 694–737 (NNNN…NNNN), 752–764 (NNNNNNNNNNNNN), 776–864 (SDDT…YLNN), and 890–927 (NNFNGDNNNNNNNKNNNNNNQNNNGNGNNNNNNNNDNN). A coiled-coil region spans residues 835–865 (NNNNNNNNQNNNNNNNNNQYNNNNKNYLNNI).

It localises to the nucleus. Functionally, putative transcription factor that may potentiate the function of warA. The chain is Homeobox protein 2 (hbx2) from Dictyostelium discoideum (Social amoeba).